The chain runs to 1434 residues: Pleiotropic drug resistance protein 1 (1434 aa).

The tract at residues 1 to 22 (MEPANLSNLRGSSLRGSTRGSL) is disordered. Residues 161–434 (LNSLHILSSR…FESMGFKCPQ (274 aa)) enclose the ABC transporter 1 domain. Residue 194–201 (GPPSSGKT) participates in ATP binding. Residues 512-725 (ELLKVCTERE…SVNSILVNEF (214 aa)) enclose the ABC transmembrane type-2 1 domain. Helical transmembrane passes span 530-550 (FVYM…MTLF), 563-583 (GGIY…NGMS), 618-638 (IPVT…VIGF), 649-669 (FLLL…IGAV), 675-695 (VAST…GFVL), 702-722 (SWWI…SILV), and 760-780 (IGVG…SLAL). The segment at 793 to 824 (LPEDGENAENGEVSSQITSTDGGDSISESQNN) is disordered. A compositionally biased stretch (polar residues) spans 804-824 (EVSSQITSTDGGDSISESQNN). Residues 837-1089 (ITFDDVVYSV…HLIKYFESNP (253 aa)) form the ABC transporter 2 domain. 882–889 (GVSGAGKT) contacts ATP. The ABC transmembrane type-2 2 domain occupies 1162-1376 (TQCVACLWKQ…TLYGLVASQF (215 aa)). A run of 7 helical transmembrane segments spans residues 1181–1201 (YTAV…TMFW), 1221–1241 (YAAV…VVAI), 1269–1289 (IPYI…MIGF), 1296–1316 (FFWY…YGMM), 1326–1346 (VASI…GFII), 1357–1377 (WYYW…SQFG), and 1406–1426 (VVAA…AFAI).

It belongs to the ABC transporter superfamily. ABCG family. PDR (TC 3.A.1.205) subfamily.

The protein resides in the membrane. Its function is as follows. May be a general defense protein. The protein is Pleiotropic drug resistance protein 1 (PDR1) of Nicotiana tabacum (Common tobacco).